Reading from the N-terminus, the 207-residue chain is Suppressor of IKBKE 1 (207 aa).

2 coiled-coil regions span residues 70–102 (HILLSQENTQIRDLQQENRELWVSLEEHQDALE) and 164–192 (CKVQERLAQLELENKELRELLSISSESLQ).

The protein belongs to the SIKE family. As to quaternary structure, interacts with IKBKE and TBK1 via its coiled coil region. Interaction with TBK1 is disrupted upon viral infection or TLR3 stimulation. Interacts with CDC42BPB. Interacts with SIKE1 which mediates association with the STRIPAK core complex composed of PP2A catalytic and scaffolding subunits, the striatins (PP2A regulatory subunits), the striatin-associated proteins MOB4, STRIP1 and STRIP2, PDCD10 and members of the STE20 kinases, such as STK24 and STK26.

The protein resides in the cytoplasm. Functionally, physiological suppressor of IKK-epsilon and TBK1 that plays an inhibitory role in virus- and TLR3-triggered IRF3. Inhibits TLR3-mediated activation of interferon-stimulated response elements (ISRE) and the IFN-beta promoter. May act by disrupting the interactions of IKBKE or TBK1 with TICAM1/TRIF, IRF3 and RIGI. Does not inhibit NF-kappa-B activation pathways. Associates with the striatin-interacting phosphatase and kinase (STRIPAK) core complex, forming the extended (SIKE1:SLMAP)STRIPAK complex. The (SIKE1:SLMAP)STRIPAK complex dephosphorylates STK3 leading to the inhibition of Hippo signaling and the control of cell growth. The polypeptide is Suppressor of IKBKE 1 (Sike1) (Mus musculus (Mouse)).